The chain runs to 2325 residues: Protein sidekick homolog (2325 aa).

The signal sequence occupies residues 1-26 (MRNRLLLIFYTTTVLWTIGYTQLVLG). The Extracellular segment spans residues 27–2019 (KPPIFQDGGS…IPDDPFYTTW (1993 aa)). Ig-like C2-type domains follow at residues 28-105 (PPIF…AAIS), 217-319 (PSLQ…AYMT), and 324-397 (PILK…ADLA). 3 cysteine pairs are disulfide-bonded: Cys52–Cys94, Cys247–Cys301, and Cys345–Cys386. Asn407 carries an N-linked (GlcNAc...) asparagine glycan. Ig-like C2-type domains are found at residues 456–544 (PSQK…VQVN) and 547–638 (SLIE…AMLQ). Intrachain disulfides connect Cys480/Cys528 and Cys568/Cys622. Residues Asn632, Asn655, Asn807, Asn868, Asn932, and Asn1016 are each glycosylated (N-linked (GlcNAc...) asparagine). Fibronectin type-III domains follow at residues 645-751 (MPER…MPQQ), 756-853 (APRN…TSEG), 858-957 (APKN…TEED), 961-1055 (SVDE…VPPE), 1059-1154 (RPSM…TLQT), 1159-1254 (PSQR…TYES), 1259-1359 (SPRN…TMED), 1363-1457 (PPES…SSVR), 1463-1566 (APAP…TLPS), 1571-1671 (QPIS…VGYS), 1673-1775 (PKRN…DKPG), 1776-1872 (PVGI…SKDG), and 1873-2004 (PPPP…TEQL). The tract at residues 1036–1059 (TRKGDGPVEETKFESGVPPELPGR) is disordered. The span at 1037-1048 (RKGDGPVEETKF) shows a compositional bias: basic and acidic residues. Asn1107 is a glycosylation site (N-linked (GlcNAc...) asparagine). The tract at residues 1137-1161 (KGRGAPSEPSRSFETLQTNPDTPSQ) is disordered. Residues 1145–1161 (PSRSFETLQTNPDTPSQ) show a composition bias toward polar residues. Asn1614 carries N-linked (GlcNAc...) asparagine glycosylation. Disordered stretches follow at residues 1857–1884 (GEQRSANVTIGPSKDGPPPPSKPQITSG) and 1918–1947 (PANGYVSQRPRRNEIKGAKSAAQTAAATST). N-linked (GlcNAc...) asparagine glycosylation is present at Asn1863. The segment covering 1935-1947 (AKSAAQTAAATST) has biased composition (low complexity). A helical membrane pass occupies residues 2020–2040 (WFMALVAMGAFVLIVIIIAIL). Residues 2041-2325 (CVTGSSAKYR…NLTTGFSSFV (285 aa)) lie on the Cytoplasmic side of the membrane. Disordered stretches follow at residues 2080-2113 (NMTRSRELPTRPGTTQSWVSDQSREPPAYGSVLG), 2164-2187 (TAYVTPSARGGSDNGRNEYMPTRS), 2202-2226 (RGHIPSSSGGSGAGSQPQGSPLQQP), and 2285-2325 (ILTG…SSFV). The segment covering 2091–2100 (PGTTQSWVSD) has biased composition (polar residues). Residues 2215 to 2226 (GSQPQGSPLQQP) show a composition bias toward low complexity. Composition is skewed to polar residues over residues 2294–2305 (AGRSSTTDSTSE) and 2313–2325 (ATPNLTTGFSSFV).

The protein belongs to the sidekick family.

The protein localises to the membrane. Its function is as follows. Cell adhesion protein. The sequence is that of Protein sidekick homolog (rig-4) from Caenorhabditis elegans.